The primary structure comprises 430 residues: Hydrogenobyrinate a,c-diamide synthase (430 aa).

The 184-residue stretch at R239–L422 folds into the GATase cobBQ-type domain. The active-site Nucleophile is the C321.

It belongs to the CobB/CbiA family. It depends on Mg(2+) as a cofactor.

It carries out the reaction hydrogenobyrinate + 2 L-glutamine + 2 ATP + 2 H2O = hydrogenobyrinate a,c-diamide + 2 L-glutamate + 2 ADP + 2 phosphate + 2 H(+). It participates in cofactor biosynthesis; adenosylcobalamin biosynthesis; cob(II)yrinate a,c-diamide from precorrin-2 (aerobic route): step 9/10. Functionally, catalyzes the ATP-dependent amidation of the two carboxylate groups at positions a and c of hydrogenobyrinate, using either L-glutamine or ammonia as the nitrogen source. This Stutzerimonas stutzeri (strain A1501) (Pseudomonas stutzeri) protein is Hydrogenobyrinate a,c-diamide synthase.